Consider the following 53-residue polypeptide: MLLACGLGVALGGGYELLLHSSFIIGNQELNAGLVELGVGLISGWGGVTEMFA.

This is an uncharacterized protein from Rickettsia conorii (strain ATCC VR-613 / Malish 7).